We begin with the raw amino-acid sequence, 364 residues long: Fructose-1,6-bisphosphatase class 1 2 (364 aa).

Mg(2+) is bound by residues glutamate 101, aspartate 123, leucine 125, and aspartate 126. Substrate contacts are provided by residues 126–129 (DGSS) and asparagine 218. Mg(2+) is bound at residue glutamate 290.

Belongs to the FBPase class 1 family. Homotetramer. It depends on Mg(2+) as a cofactor.

The protein localises to the cytoplasm. The catalysed reaction is beta-D-fructose 1,6-bisphosphate + H2O = beta-D-fructose 6-phosphate + phosphate. The protein operates within carbohydrate biosynthesis; gluconeogenesis. The chain is Fructose-1,6-bisphosphatase class 1 2 from Cupriavidus necator (strain ATCC 17699 / DSM 428 / KCTC 22496 / NCIMB 10442 / H16 / Stanier 337) (Ralstonia eutropha).